A 427-amino-acid polypeptide reads, in one-letter code: Large ribosomal subunit protein uL4 (427 aa).

At A2 the chain carries N-acetylalanine. An N6-acetyllysine modification is found at K14. R97 is subject to Omega-N-methylarginine. At K106 the chain carries N6-acetyllysine. K239 participates in a covalent cross-link: Glycyl lysine isopeptide (Lys-Gly) (interchain with G-Cter in SUMO2). Position 259 is an N6-acetyllysine (K259). T266 bears the Phosphothreonine mark. Phosphoserine is present on residues S290 and S295. R300 is subject to Citrulline. Residue K327 forms a Glycyl lysine isopeptide (Lys-Gly) (interchain with G-Cter in SUMO2) linkage. 2 positions are modified to N6-acetyllysine: K333 and K353. K364 carries the N6-acetyllysine; alternate modification. A Glycyl lysine isopeptide (Lys-Gly) (interchain with G-Cter in SUMO1); alternate cross-link involves residue K364. The residue at position 365 (S365) is a Phosphoserine. Residues 369-427 (AAVAGKKPVVGKKGKKAAVGVKKQKKPLVGKKAAATKKPAPEKKPAEKKPTTEEKKPAA) are disordered. Positions 377-397 (VVGKKGKKAAVGVKKQKKPLV) are enriched in basic residues. Positions 407–427 (PAPEKKPAEKKPTTEEKKPAA) are enriched in basic and acidic residues.

Belongs to the universal ribosomal protein uL4 family. As to quaternary structure, component of the large ribosomal subunit. May bind IPO9 with low affinity. Interacts with RBM3. In terms of processing, citrullinated by PADI4.

It localises to the cytoplasm. Functionally, component of the large ribosomal subunit. The ribosome is a large ribonucleoprotein complex responsible for the synthesis of proteins in the cell. The chain is Large ribosomal subunit protein uL4 (RPL4) from Homo sapiens (Human).